We begin with the raw amino-acid sequence, 342 residues long: MAELFYDDDADLSVIQRKKVAVIGYGSQGHAHALNLRDSGVDVRVGLREGSASRAKAENEGLKVLTVPEAVKEADVVVILAPDQHQRGLYTADIEPNLNPGTTLVFGHGFNIRYGYIKPSADLDVVMVAPKGPGHLVRREYVDGRGVPVIVAVEQDATGGAWELALSYAKAIGGLRAAGIKTTFTEETETDLFGEQAVLCGGVSQLVQYGFETLTEAGYQPEVAYFEVLHELKLIVDLMYEGGIAKQRWSVSDTAEYGDYVSGPRVIDPRVKENMQAVLADVQNGAFAARFIADQDAGAPEFAELRAKGEAHPIEGVGRELRKLFAWVKPSDSDYTEGSAAR.

The region spanning 2 to 182 (AELFYDDDAD…GGLRAAGIKT (181 aa)) is the KARI N-terminal Rossmann domain. NADP(+) is bound by residues 25-28 (YGSQ), Arg-48, Ser-51, Ser-53, and 83-86 (DQHQ). His-108 is a catalytic residue. Gly-134 lines the NADP(+) pocket. In terms of domain architecture, KARI C-terminal knotted spans 183 to 328 (TFTEETETDL…RELRKLFAWV (146 aa)). Asp-191, Glu-195, Glu-227, and Glu-231 together coordinate Mg(2+). Substrate is bound at residue Ser-252.

This sequence belongs to the ketol-acid reductoisomerase family. The cofactor is Mg(2+).

The catalysed reaction is (2R)-2,3-dihydroxy-3-methylbutanoate + NADP(+) = (2S)-2-acetolactate + NADPH + H(+). The enzyme catalyses (2R,3R)-2,3-dihydroxy-3-methylpentanoate + NADP(+) = (S)-2-ethyl-2-hydroxy-3-oxobutanoate + NADPH + H(+). The protein operates within amino-acid biosynthesis; L-isoleucine biosynthesis; L-isoleucine from 2-oxobutanoate: step 2/4. It functions in the pathway amino-acid biosynthesis; L-valine biosynthesis; L-valine from pyruvate: step 2/4. Its function is as follows. Involved in the biosynthesis of branched-chain amino acids (BCAA). Catalyzes an alkyl-migration followed by a ketol-acid reduction of (S)-2-acetolactate (S2AL) to yield (R)-2,3-dihydroxy-isovalerate. In the isomerase reaction, S2AL is rearranged via a Mg-dependent methyl migration to produce 3-hydroxy-3-methyl-2-ketobutyrate (HMKB). In the reductase reaction, this 2-ketoacid undergoes a metal-dependent reduction by NADPH to yield (R)-2,3-dihydroxy-isovalerate. The sequence is that of Ketol-acid reductoisomerase (NADP(+)) from Beutenbergia cavernae (strain ATCC BAA-8 / DSM 12333 / CCUG 43141 / JCM 11478 / NBRC 16432 / NCIMB 13614 / HKI 0122).